The primary structure comprises 380 residues: Kappa-type opioid receptor (380 aa).

Residues 1 to 57 (MESPIQIFRGEPGPTCAPSACLLPNSSSWFPNWAESDSNGSVGSEDQQLEPAHISPA) are Extracellular-facing. Residues asparagine 25 and asparagine 39 are each glycosylated (N-linked (GlcNAc...) asparagine). Residues 58-85 (IPVIITAVYSVVFVVGLVGNSLVMFVII) traverse the membrane as a helical segment. The Cytoplasmic segment spans residues 86–95 (RYTKMKTATN). Residues 96–119 (IYIFNLALADALVTTTMPFQSAVY) traverse the membrane as a helical segment. Residues 120–132 (LMNSWPFGDVLCK) lie on the Extracellular side of the membrane. Cysteines 131 and 210 form a disulfide. A helical transmembrane segment spans residues 133–154 (IVISIDYYNMFTSIFTLTMMSV). At 155–173 (DRYIAVCHPVKALDFRTPL) the chain is on the cytoplasmic side. The chain crosses the membrane as a helical span at residues 174-196 (KAKIINICIWLLASSVGISAIVL). Residues 197-222 (GGTKVREDVDVIECSLQFPDDEYSWW) are Extracellular-facing. The helical transmembrane segment at 223–247 (DLFMKICVFVFAFVIPVLIIIVCYT) threads the bilayer. Over 248-274 (LMILRLKSVRLLSGSREKDRNLRRITK) the chain is Cytoplasmic. A helical transmembrane segment spans residues 275 to 296 (LVLVVVAVFIICWTPIHIFILV). At 297–311 (EALGSTSHSTAVLSS) the chain is on the extracellular side. The helical transmembrane segment at 312–333 (YYFCIALGYTNSSLNPVLYAFL) threads the bilayer. At 334–380 (DENFKRCFRDFCFPIKMRMERQSTNRVRNTVQDPASMRDVGGMNKPV) the chain is on the cytoplasmic side. Cysteine 345 carries the S-palmitoyl cysteine lipid modification.

Belongs to the G-protein coupled receptor 1 family. As to quaternary structure, interacts with NHERF1. Interacts with GABARAPL1.

The protein localises to the cell membrane. G-protein coupled opioid receptor that functions as a receptor for endogenous alpha-neoendorphins and dynorphins, but has low affinity for beta-endorphins. Also functions as a receptor for various synthetic opioids and for the psychoactive diterpene salvinorin A. Ligand binding causes a conformation change that triggers signaling via guanine nucleotide-binding proteins (G proteins) and modulates the activity of down-stream effectors, such as adenylate cyclase. Signaling leads to the inhibition of adenylate cyclase activity. Inhibits neurotransmitter release by reducing calcium ion currents and increasing potassium ion conductance. Plays a role in the perception of pain. Plays a role in mediating reduced physical activity upon treatment with synthetic opioids. Plays a role in the regulation of salivation in response to synthetic opioids. May play a role in arousal and regulation of autonomic and neuroendocrine functions. In Rattus norvegicus (Rat), this protein is Kappa-type opioid receptor (Oprk1).